A 183-amino-acid polypeptide reads, in one-letter code: Protein CT_584 (183 aa).

The protein belongs to the chlamydial CPn_0803/CT_584/TC_0873 family.

The polypeptide is Protein CT_584 (Chlamydia trachomatis serovar D (strain ATCC VR-885 / DSM 19411 / UW-3/Cx)).